Here is a 175-residue protein sequence, read N- to C-terminus: NADH-quinone oxidoreductase subunit I 2 (175 aa).

2 consecutive 4Fe-4S ferredoxin-type domains span residues 50 to 82 (HVLQ…IEAA) and 98 to 127 (KVYN…HGHG). Cysteine 62, cysteine 65, cysteine 68, cysteine 72, cysteine 107, cysteine 110, cysteine 113, and cysteine 117 together coordinate [4Fe-4S] cluster.

The protein belongs to the complex I 23 kDa subunit family. As to quaternary structure, NDH-1 is composed of 14 different subunits. Subunits NuoA, H, J, K, L, M, N constitute the membrane sector of the complex. Requires [4Fe-4S] cluster as cofactor.

It is found in the cell inner membrane. It carries out the reaction a quinone + NADH + 5 H(+)(in) = a quinol + NAD(+) + 4 H(+)(out). Its function is as follows. NDH-1 shuttles electrons from NADH, via FMN and iron-sulfur (Fe-S) centers, to quinones in the respiratory chain. The immediate electron acceptor for the enzyme in this species is believed to be ubiquinone. Couples the redox reaction to proton translocation (for every two electrons transferred, four hydrogen ions are translocated across the cytoplasmic membrane), and thus conserves the redox energy in a proton gradient. The sequence is that of NADH-quinone oxidoreductase subunit I 2 from Koribacter versatilis (strain Ellin345).